Consider the following 142-residue polypeptide: Peptide methionine sulfoxide reductase MsrB (142 aa).

A MsrB domain is found at 3–126 (KEELKKKLSP…NSAALRFIPF (124 aa)). Residue Cys-115 is the Nucleophile of the active site.

This sequence belongs to the MsrB Met sulfoxide reductase family.

It catalyses the reaction L-methionyl-[protein] + [thioredoxin]-disulfide + H2O = L-methionyl-(R)-S-oxide-[protein] + [thioredoxin]-dithiol. The protein is Peptide methionine sulfoxide reductase MsrB of Lactococcus lactis subsp. cremoris (strain SK11).